The sequence spans 207 residues: Cytochrome c biogenesis ATP-binding export protein CcmA (207 aa).

The 204-residue stretch at 4–207 folds into the ABC transporter domain; that stretch reads LEARELLCER…RISLTQTGAA (204 aa). 36–43 serves as a coordination point for ATP; that stretch reads GSNGAGKT.

The protein belongs to the ABC transporter superfamily. CcmA exporter (TC 3.A.1.107) family. As to quaternary structure, the complex is composed of two ATP-binding proteins (CcmA) and two transmembrane proteins (CcmB).

It localises to the cell inner membrane. It carries out the reaction heme b(in) + ATP + H2O = heme b(out) + ADP + phosphate + H(+). Its function is as follows. Part of the ABC transporter complex CcmAB involved in the biogenesis of c-type cytochromes; once thought to export heme, this seems not to be the case, but its exact role is uncertain. Responsible for energy coupling to the transport system. The sequence is that of Cytochrome c biogenesis ATP-binding export protein CcmA from Escherichia coli O6:H1 (strain CFT073 / ATCC 700928 / UPEC).